A 282-amino-acid polypeptide reads, in one-letter code: Pantothenate synthetase (282 aa).

Residue 30-37 (MGYLHEGH) participates in ATP binding. H37 acts as the Proton donor in catalysis. Q61 lines the (R)-pantoate pocket. Q61 is a binding site for beta-alanine. 147 to 150 (GMKD) contributes to the ATP binding site. Q153 is a binding site for (R)-pantoate. ATP-binding positions include V176 and 184 to 187 (KSSR).

This sequence belongs to the pantothenate synthetase family. As to quaternary structure, homodimer.

It is found in the cytoplasm. The enzyme catalyses (R)-pantoate + beta-alanine + ATP = (R)-pantothenate + AMP + diphosphate + H(+). It participates in cofactor biosynthesis; (R)-pantothenate biosynthesis; (R)-pantothenate from (R)-pantoate and beta-alanine: step 1/1. Functionally, catalyzes the condensation of pantoate with beta-alanine in an ATP-dependent reaction via a pantoyl-adenylate intermediate. This chain is Pantothenate synthetase, found in Bacillus thuringiensis subsp. konkukian (strain 97-27).